Here is a 650-residue protein sequence, read N- to C-terminus: Acetyl-coenzyme A synthetase (650 aa).

CoA is bound by residues 191-194 (RGGR), threonine 311, and asparagine 335. Residues 387–389 (GEP), 411–416 (DTWWQT), aspartate 500, and arginine 515 contribute to the ATP site. Serine 523 contacts CoA. Arginine 526 provides a ligand contact to ATP. The Mg(2+) site is built by valine 537, histidine 539, and valine 542. Position 584 (arginine 584) interacts with CoA. An N6-acetyllysine modification is found at lysine 609.

This sequence belongs to the ATP-dependent AMP-binding enzyme family. It depends on Mg(2+) as a cofactor. Post-translationally, acetylated. Deacetylation by the SIR2-homolog deacetylase activates the enzyme.

The catalysed reaction is acetate + ATP + CoA = acetyl-CoA + AMP + diphosphate. Catalyzes the conversion of acetate into acetyl-CoA (AcCoA), an essential intermediate at the junction of anabolic and catabolic pathways. AcsA undergoes a two-step reaction. In the first half reaction, AcsA combines acetate with ATP to form acetyl-adenylate (AcAMP) intermediate. In the second half reaction, it can then transfer the acetyl group from AcAMP to the sulfhydryl group of CoA, forming the product AcCoA. The protein is Acetyl-coenzyme A synthetase of Shewanella putrefaciens (strain CN-32 / ATCC BAA-453).